A 364-amino-acid polypeptide reads, in one-letter code: MARRSRYISLAAVMATLLSALGVTFLLGQGRAEAHGVAMMPGSRTYLCQLDAKTGTGALDPTNPACRSALDTSGATALYNWFAVLDSNAGGRGAGYVPDGTLCSAGNRSPYDFRGYNAARSDWPRTHLTSGSTIQVNYSNWAAHPGDFRVYLTKPGWSPTSELGWDDLELIETVTDPPQRGSAGADGGHYYWDLALPSGRSGDALIFMQWVRSDSQENFFSCSDVVFDGGNGEVTGIRGSGGTPTPTPTPTTPPTTPPPTHSGSCMAVYNVENSWSGGFQGSVEVMNHGTEPLNGWAVQWKPGNGTTLGGVWNGSPTRGTDGTVKVRNVDHNRVVPPDGSVTFGFTATSTGNDFPVGTIGCVAP.

A signal peptide spans 1 to 34; the sequence is MARRSRYISLAAVMATLLSALGVTFLLGQGRAEA. Cu cation is bound by residues His-35 and His-144. Positions 35-225 constitute a Chitin-binding type-4 domain; the sequence is HGVAMMPGSR…QENFFSCSDV (191 aa). The segment at 234 to 261 is disordered; that stretch reads VTGIRGSGGTPTPTPTPTTPPTTPPPTH. The segment covering 245–260 has biased composition (pro residues); sequence TPTPTPTTPPTTPPPT. Residues 258–364 enclose the CBM2 domain; it reads PPTHSGSCMA…PVGTIGCVAP (107 aa).

The cofactor is Cu(2+).

Its subcellular location is the secreted. The catalysed reaction is [(1-&gt;4)-beta-D-glucosyl]n+m + reduced acceptor + O2 = [(1-&gt;4)-beta-D-glucosyl]m-1-(1-&gt;4)-D-glucono-1,5-lactone + [(1-&gt;4)-beta-D-glucosyl]n + acceptor + H2O.. Its pathway is glycan metabolism; cellulose degradation. Functionally, involved in the degradation of lignocellulosic biomass. Catalyzes the oxidative cleavage of glycosidic bonds in cellulosic substrates via a copper-dependent mechanism. Degrades phosphoric acid swollen cellulose (PASC) to oxidized cellooligosaccharides with degrees of polymerization of 4-8. Also shows activity on agricultural fiber paper pulps such as flax pulp. Is not active on chitin. The chain is Lytic cellulose monooxygenase from Streptomyces ambofaciens (strain ATCC 23877 / 3486 / DSM 40053 / JCM 4204 / NBRC 12836 / NRRL B-2516).